We begin with the raw amino-acid sequence, 210 residues long: Guanylate kinase (210 aa).

The Guanylate kinase-like domain occupies 8–188 (GNLFIIAAPS…SLASLEHIVL (181 aa)). Residue 15 to 22 (APSGAGKS) coordinates ATP.

Belongs to the guanylate kinase family.

It is found in the cytoplasm. It catalyses the reaction GMP + ATP = GDP + ADP. Functionally, essential for recycling GMP and indirectly, cGMP. The chain is Guanylate kinase from Idiomarina loihiensis (strain ATCC BAA-735 / DSM 15497 / L2-TR).